The sequence spans 663 residues: MSKGPILVTCGLPYTNGPCHLGHLRTYVPGDMYVRYLRHRGEEVVFVCGSDNHGTPIVVSAEEQGVTPKELSLKYHHHFEETFIKMGIRFDRFGMTDGKANHHRTREMMQRLIDKGYIYSATVSQSYCTTCSRFLPDRYVEGICPHCGAVARGDECDQGCGKHLEPGEIRDPVCKVCGTRAELRSQEHFFFKLSAFKEFLGTFLKGVRGTDNAKNYALGWVNDDLHDWCITRTLDWGVKFPGRDDLVVYVWVDAPVGYIAFTEEWAAAHGRDWREFWCGDGEITHFIGGDITYHHCIFWPALLKGAGYGVPSAIVASGMLKIDDHKFSKSRGYVVWTNDDYLDLGLPADYLRYYLLAYTSHTKELNFSWQAFADRVNNELVNTFGNFVHRTLHFAHAQGIGIPDLDADQEILQRIDETIAAVDTAMDAFEFKNAVDAVMTLAAFGNNYIQTAAPWKLIKTDRPAAVQVIRNCLQLVRALALLIDPTMPETASKIWMMLGETDQVRDHRTSEATEPLTAGELAPPTTLFARMEEKEVATLEKTLMMRVEEAEKRGQPTEELISIDEFGKMKLIVGTVISAEKIPKSSKLLKLIVDLGSERRQIVSGIAKFYDPEHLVGSSVVVIANLQPVTIFGVESRGMILAAGDNAALLTPNQAVEPGTPIR.

The short motif at 13–23 is the 'HIGH' region element; it reads PYTNGPCHLGH. Zn(2+) is bound by residues C144, C147, C156, and C160. The 'KMSKS' region motif lies at 326-330; sequence KFSKS. Position 329 (K329) interacts with ATP. In terms of domain architecture, tRNA-binding spans 565–663; the sequence is EFGKMKLIVG…QAVEPGTPIR (99 aa).

This sequence belongs to the class-I aminoacyl-tRNA synthetase family. MetG type 1 subfamily. As to quaternary structure, homodimer. The cofactor is Zn(2+).

Its subcellular location is the cytoplasm. It carries out the reaction tRNA(Met) + L-methionine + ATP = L-methionyl-tRNA(Met) + AMP + diphosphate. Its function is as follows. Is required not only for elongation of protein synthesis but also for the initiation of all mRNA translation through initiator tRNA(fMet) aminoacylation. This chain is Methionine--tRNA ligase, found in Methanosphaerula palustris (strain ATCC BAA-1556 / DSM 19958 / E1-9c).